The following is a 249-amino-acid chain: tRNA pseudouridine synthase A (249 aa).

Residue Asp-53 is the Nucleophile of the active site. Tyr-111 contacts substrate.

It belongs to the tRNA pseudouridine synthase TruA family. As to quaternary structure, homodimer.

It catalyses the reaction uridine(38/39/40) in tRNA = pseudouridine(38/39/40) in tRNA. Its function is as follows. Formation of pseudouridine at positions 38, 39 and 40 in the anticodon stem and loop of transfer RNAs. In Streptococcus pyogenes serotype M3 (strain ATCC BAA-595 / MGAS315), this protein is tRNA pseudouridine synthase A.